We begin with the raw amino-acid sequence, 229 residues long: UPF0758 protein Cbei_0490 (229 aa).

The 123-residue stretch at Lys107–Ile229 folds into the MPN domain. Zn(2+)-binding residues include His178, His180, and Asp191. A JAMM motif motif is present at residues His178 to Asp191.

It belongs to the UPF0758 family.

This chain is UPF0758 protein Cbei_0490, found in Clostridium beijerinckii (strain ATCC 51743 / NCIMB 8052) (Clostridium acetobutylicum).